The primary structure comprises 686 residues: Amphiphysin (686 aa).

Coiled coils occupy residues 10 to 83 and 144 to 191; these read AKNV…SLHE and DYDS…QEEL. In terms of domain architecture, BAR spans 24 to 240; sequence VLQKLGKADE…MTKLGDQHAD (217 aa). Disordered regions lie at residues 244-314, 421-441, and 483-597; these read SIQG…PTKE, AETE…ATAA, and VEEA…AGAV. The residue at position 252 (serine 252) is a Phosphoserine. At threonine 260 the chain carries Phosphothreonine. The span at 261-274 shows a compositional bias: pro residues; the sequence is PSPPEEPSPLPSPT. Serine 262, serine 268, serine 272, and serine 276 each carry phosphoserine. A Phosphothreonine modification is found at threonine 280. Over residues 424-441 the composition is skewed to low complexity; the sequence is EQALPTEPQAEEPPATAA. Phosphoserine is present on serine 500. Residues 541-562 show a composition bias toward basic and acidic residues; it reads SNHEGEGEHQETATGTEPREAA. Residues 613 to 686 form the SH3 domain; it reads GFLYKVETLH…FPENFTRRLE (74 aa). Serine 629 bears the Phosphoserine mark.

In terms of assembly, heterodimer with BIN1. Binds SH3GLB1. Interacts with REPS1 and SGIP1. Binds AP2A2. Interacts with AP2B1. Interacts with DNM1 and SYNJ1.

It is found in the cytoplasmic vesicle. The protein localises to the secretory vesicle. It localises to the synaptic vesicle membrane. Its subcellular location is the cytoplasm. The protein resides in the cytoskeleton. Its function is as follows. May participate in mechanisms of regulated exocytosis in synapses and certain endocrine cell types. May control the properties of the membrane associated cytoskeleton. In Mus musculus (Mouse), this protein is Amphiphysin (Amph).